Reading from the N-terminus, the 181-residue chain is tRNA-splicing endonuclease (181 aa).

Residues Y118, H126, and K157 contribute to the active site.

The protein belongs to the tRNA-intron endonuclease family. Archaeal short subfamily. Homotetramer; although the tetramer contains four active sites, only two participate in the cleavage. Therefore, it should be considered as a dimer of dimers.

It carries out the reaction pretRNA = a 3'-half-tRNA molecule with a 5'-OH end + a 5'-half-tRNA molecule with a 2',3'-cyclic phosphate end + an intron with a 2',3'-cyclic phosphate and a 5'-hydroxyl terminus.. Its function is as follows. Endonuclease that removes tRNA introns. Cleaves pre-tRNA at the 5'- and 3'-splice sites to release the intron. The products are an intron and two tRNA half-molecules bearing 2',3' cyclic phosphate and 5'-OH termini. Recognizes a pseudosymmetric substrate in which 2 bulged loops of 3 bases are separated by a stem of 4 bp. The chain is tRNA-splicing endonuclease from Sulfolobus acidocaldarius (strain ATCC 33909 / DSM 639 / JCM 8929 / NBRC 15157 / NCIMB 11770).